A 251-amino-acid polypeptide reads, in one-letter code: 3-deoxy-manno-octulosonate cytidylyltransferase (251 aa).

It belongs to the KdsB family.

The protein localises to the cytoplasm. It catalyses the reaction 3-deoxy-alpha-D-manno-oct-2-ulosonate + CTP = CMP-3-deoxy-beta-D-manno-octulosonate + diphosphate. Its pathway is nucleotide-sugar biosynthesis; CMP-3-deoxy-D-manno-octulosonate biosynthesis; CMP-3-deoxy-D-manno-octulosonate from 3-deoxy-D-manno-octulosonate and CTP: step 1/1. The protein operates within bacterial outer membrane biogenesis; lipopolysaccharide biosynthesis. In terms of biological role, activates KDO (a required 8-carbon sugar) for incorporation into bacterial lipopolysaccharide in Gram-negative bacteria. This is 3-deoxy-manno-octulosonate cytidylyltransferase from Agrobacterium fabrum (strain C58 / ATCC 33970) (Agrobacterium tumefaciens (strain C58)).